The following is a 182-amino-acid chain: MNKQPEDWLDDVPENIDEEDDEIIWVSKSEIKRDAEALKDLGVELVELGKNALERIPLDEDLRAAIDLAQKIKKEGRRRQLQLIGKMLRARDVEPIQTALDKLKNRHNQQVSLFHKLEALRDRLVEEGDDAIPPILALYPEADRQQLRSLVRNAQKEKAANKPPKAYRQIFQYLRDLAETAE.

Belongs to the DarP family.

It localises to the cytoplasm. Functionally, member of a network of 50S ribosomal subunit biogenesis factors which assembles along the 30S-50S interface, preventing incorrect 23S rRNA structures from forming. Promotes peptidyl transferase center (PTC) maturation. The protein is Dual-action ribosomal maturation protein DarP of Serratia proteamaculans (strain 568).